The primary structure comprises 249 residues: DNA polymerase sliding clamp (249 aa).

This sequence belongs to the PCNA family. In terms of assembly, homotrimer. The subunits circularize to form a toroid; DNA passes through its center. Replication factor C (RFC) is required to load the toroid on the DNA.

In terms of biological role, sliding clamp subunit that acts as a moving platform for DNA processing. Responsible for tethering the catalytic subunit of DNA polymerase and other proteins to DNA during high-speed replication. The polypeptide is DNA polymerase sliding clamp (Methanococcus vannielii (strain ATCC 35089 / DSM 1224 / JCM 13029 / OCM 148 / SB)).